The following is a 198-amino-acid chain: Nucleoid occlusion factor SlmA (198 aa).

An HTH tetR-type domain is found at 10-70 (NRREEILQSL…SLIEFIEDSL (61 aa)). Positions 33 to 52 (TTAKLAASVGVSEAALYRHF) form a DNA-binding region, H-T-H motif. Positions 117 to 144 (EQDRLQGRINQLFERIEAQLRQVLREKR) form a coiled coil.

Belongs to the nucleoid occlusion factor SlmA family. Homodimer. Interacts with FtsZ.

Its subcellular location is the cytoplasm. The protein localises to the nucleoid. In terms of biological role, required for nucleoid occlusion (NO) phenomenon, which prevents Z-ring formation and cell division over the nucleoid. Acts as a DNA-associated cell division inhibitor that binds simultaneously chromosomal DNA and FtsZ, and disrupts the assembly of FtsZ polymers. SlmA-DNA-binding sequences (SBS) are dispersed on non-Ter regions of the chromosome, preventing FtsZ polymerization at these regions. The protein is Nucleoid occlusion factor SlmA of Escherichia coli O127:H6 (strain E2348/69 / EPEC).